The following is a 117-amino-acid chain: uncharacterized protein (117 aa).

The helical transmembrane segment at Phe76–Phe96 threads the bilayer.

The protein resides in the membrane. This is an uncharacterized protein from Saccharomyces cerevisiae (strain ATCC 204508 / S288c) (Baker's yeast).